Consider the following 263-residue polypeptide: Receptor-transporting protein 1 (263 aa).

At 1-238 (MRIFRPWRLR…ETGSGCNFCS (238 aa)) the chain is on the cytoplasmic side. Residues 88–197 (ASGRFHCSWC…GEFCEACQEG (110 aa)) form a 3CxxC-type zinc finger. A helical transmembrane segment spans residues 239–259 (IPWCLFWATVLMLIIYLQFSF). At 260 to 263 (RTSV) the chain is on the extracellular side.

It belongs to the TMEM7 family. As to quaternary structure, interacts with olfactory receptors. In terms of tissue distribution, predominantly expressed in olfactory and vomeronasal organs, in mature olfactory sensory neurons.

It localises to the cell membrane. In terms of biological role, specifically promotes functional cell surface expression of olfactory receptors, but not of other GPCRs. This chain is Receptor-transporting protein 1 (Rtp1), found in Mus musculus (Mouse).